A 473-amino-acid chain; its full sequence is Trigger factor (473 aa).

In terms of domain architecture, PPIase FKBP-type spans 174–261 (GDIAVVSFKG…LKDLKEKELP (88 aa)). The disordered stretch occupies residues 442 to 473 (ATKLTTKTTTKATTKKGVKTKSKPKVNKKEKN). The segment covering 444 to 453 (KLTTKTTTKA) has biased composition (low complexity). The segment covering 454-467 (TTKKGVKTKSKPKV) has biased composition (basic residues).

This sequence belongs to the FKBP-type PPIase family. Tig subfamily.

It is found in the cytoplasm. The catalysed reaction is [protein]-peptidylproline (omega=180) = [protein]-peptidylproline (omega=0). Functionally, involved in protein export. Acts as a chaperone by maintaining the newly synthesized protein in an open conformation. Functions as a peptidyl-prolyl cis-trans isomerase. This Prochlorococcus marinus subsp. pastoris (strain CCMP1986 / NIES-2087 / MED4) protein is Trigger factor.